The chain runs to 383 residues: Acetylornithine deacetylase (383 aa).

A Zn(2+)-binding site is contributed by H80. The active site involves D82. D112 lines the Zn(2+) pocket. E144 is an active-site residue. Zn(2+)-binding residues include E145, E169, and H355.

It belongs to the peptidase M20A family. ArgE subfamily. As to quaternary structure, homodimer. Zn(2+) is required as a cofactor. The cofactor is Co(2+). Glutathione serves as cofactor.

The protein localises to the cytoplasm. The catalysed reaction is N(2)-acetyl-L-ornithine + H2O = L-ornithine + acetate. The protein operates within amino-acid biosynthesis; L-arginine biosynthesis; L-ornithine from N(2)-acetyl-L-ornithine (linear): step 1/1. Catalyzes the hydrolysis of the amide bond of N(2)-acetylated L-amino acids. Cleaves the acetyl group from N-acetyl-L-ornithine to form L-ornithine, an intermediate in L-arginine biosynthesis pathway, and a branchpoint in the synthesis of polyamines. In Salmonella agona (strain SL483), this protein is Acetylornithine deacetylase.